The primary structure comprises 306 residues: Replication termination factor 2 (306 aa).

Positions 193 to 276 (AKLEKKTKKP…RSIADSEESE (84 aa)) are disordered. The span at 226–240 (GKPEEASLDSREKKT) shows a compositional bias: basic and acidic residues. Over residues 243-255 (APKSTAMNESSSG) the composition is skewed to polar residues. Residue Ser287 is modified to Phosphoserine.

The protein belongs to the rtf2 family. In terms of assembly, interacts with DDI2; probably also interacts with DDI1. In terms of processing, undergoes proteasomal degradation, via DDI1 and DDI2. Removal from stalled replisomes and degradation are required for genome stability.

The protein resides in the chromosome. In terms of biological role, replication termination factor which is a component of the elongating replisome. Required for ATR pathway signaling upon DNA damage and has a positive activity during DNA replication. Might function to facilitate fork pausing at replication fork barriers like the rDNA. May be globally required to stimulate ATR signaling after the fork stalls or encounters a lesion. Interacts with nascent DNA. The polypeptide is Replication termination factor 2 (Homo sapiens (Human)).